A 430-amino-acid chain; its full sequence is V-type ATP synthase beta chain 1 (430 aa).

Belongs to the ATPase alpha/beta chains family.

Functionally, produces ATP from ADP in the presence of a proton gradient across the membrane. The V-type beta chain is a regulatory subunit. The protein is V-type ATP synthase beta chain 1 (atpB1) of Treponema pallidum (strain Nichols).